The following is a 101-amino-acid chain: Phosphoribosyl-AMP cyclohydrolase (101 aa).

Asp71 serves as a coordination point for Mg(2+). Cys72 serves as a coordination point for Zn(2+). Residues Asp73 and Asp75 each contribute to the Mg(2+) site. Residues Cys88 and Cys95 each coordinate Zn(2+).

This sequence belongs to the PRA-CH family. In terms of assembly, homodimer. It depends on Mg(2+) as a cofactor. Zn(2+) is required as a cofactor.

It is found in the cytoplasm. The catalysed reaction is 1-(5-phospho-beta-D-ribosyl)-5'-AMP + H2O = 1-(5-phospho-beta-D-ribosyl)-5-[(5-phospho-beta-D-ribosylamino)methylideneamino]imidazole-4-carboxamide. The protein operates within amino-acid biosynthesis; L-histidine biosynthesis; L-histidine from 5-phospho-alpha-D-ribose 1-diphosphate: step 3/9. In terms of biological role, catalyzes the hydrolysis of the adenine ring of phosphoribosyl-AMP. The chain is Phosphoribosyl-AMP cyclohydrolase from Bacillus cytotoxicus (strain DSM 22905 / CIP 110041 / 391-98 / NVH 391-98).